The primary structure comprises 141 residues: Hemoglobin subunit alpha (141 aa).

In terms of domain architecture, Globin spans 1 to 141 (VLSPADKTNV…VSTVLTSKYR (141 aa)). Phosphoserine is present on serine 3. Lysine 7 carries the post-translational modification N6-succinyllysine. Position 8 is a phosphothreonine (threonine 8). Lysine 11 is subject to N6-succinyllysine. Residue lysine 16 is modified to N6-acetyllysine; alternate. Lysine 16 is subject to N6-succinyllysine; alternate. Tyrosine 24 carries the phosphotyrosine modification. Residue serine 35 is modified to Phosphoserine. Lysine 40 carries the N6-succinyllysine modification. Serine 49 carries the post-translational modification Phosphoserine. Histidine 58 provides a ligand contact to O2. Residue histidine 87 coordinates heme b. Position 102 is a phosphoserine (serine 102). Position 108 is a phosphothreonine (threonine 108). A phosphoserine mark is found at serine 124 and serine 131. Residues threonine 134 and threonine 137 each carry the phosphothreonine modification. Serine 138 bears the Phosphoserine mark.

This sequence belongs to the globin family. In terms of assembly, heterotetramer of two alpha chains and two beta chains. In terms of tissue distribution, red blood cells.

Functionally, involved in oxygen transport from the lung to the various peripheral tissues. In terms of biological role, hemopressin acts as an antagonist peptide of the cannabinoid receptor CNR1. Hemopressin-binding efficiently blocks cannabinoid receptor CNR1 and subsequent signaling. The polypeptide is Hemoglobin subunit alpha (HBA) (Loris tardigradus (Slender loris)).